The sequence spans 78 residues: D-alanyl carrier protein (78 aa).

The region spanning 1–78 (MAFRENVLEI…MIITQLEALK (78 aa)) is the Carrier domain. O-(pantetheine 4'-phosphoryl)serine is present on Ser-36.

This sequence belongs to the DltC family. Post-translationally, 4'-phosphopantetheine is transferred from CoA to a specific serine of apo-DCP.

It is found in the cytoplasm. The protein operates within cell wall biogenesis; lipoteichoic acid biosynthesis. Its function is as follows. Carrier protein involved in the D-alanylation of lipoteichoic acid (LTA). The loading of thioester-linked D-alanine onto DltC is catalyzed by D-alanine--D-alanyl carrier protein ligase DltA. The DltC-carried D-alanyl group is further transferred to cell membrane phosphatidylglycerol (PG) by forming an ester bond, probably catalyzed by DltD. D-alanylation of LTA plays an important role in modulating the properties of the cell wall in Gram-positive bacteria, influencing the net charge of the cell wall. This is D-alanyl carrier protein from Listeria innocua serovar 6a (strain ATCC BAA-680 / CLIP 11262).